We begin with the raw amino-acid sequence, 680 residues long: Putative E3 ubiquitin-protein ligase UNKL (680 aa).

The tract at residues 1 to 22 is disordered; sequence MPSVSKAAAAALSGSPPQTEKP. C3H1-type zinc fingers lie at residues 75-104, 115-145, 243-277, and 283-310; these read YSPDVYCSKYNEATGVCPDGDECPYLHRTT, YYKTGTCIHETDARGHCVKNGLHCAFAHGPL, QYRSTPCPSVKHGDEWGEPSRCDGGDGCQYCHSRT, and PESTKCNDMRQTGYCPRGPFCAFAHVEK. 4 stretches are compositionally biased toward low complexity: residues 326–337, 375–396, 465–497, and 545–562; these read TSPSSTGSGQPG, VSSSVASSLASSAGSGSSSPTA, SLPRAPSLHSPSSASTSPLGSLSQPLPGPVGSS, and SPSPILSAGPPSSSSASP. Disordered regions lie at residues 326-358, 375-400, 442-520, and 545-566; these read TSPSSTGSGQPGNAKRRDSPAEGGPRGSEQDSK, VSSSVASSLASSAGSGSSSPTALPAP, DGHD…SAAS, and SPSPILSAGPPSSSSASPNGAE. Positions 563–619 form a coiled coil; it reads NGAELARVRRQLDEAKRKIRQWEESWQQVKQVCDAWQREAQEAKERARVADSDRQLA. Residues 639–674 form an RING-type zinc finger; that stretch reads CVACRERAHGAVLRPCQHHILCEPCAATAPECPYCK.

It belongs to the unkempt family. Isoform 4 (C-terminal) interacts with the GTP-bound form of RAC1. Isoform 4 (C-terminal) interacts with SMARCD2/BAF60b. In terms of processing, isoform 4 is ubiquitinated in the C-terminal. Ubiquitination is enhanced by activated RAC1. The presence of the RING finger domain is not essential for ubiquitination to occur.

The protein resides in the cytoplasm. The protein localises to the nucleus. It functions in the pathway protein modification; protein ubiquitination. May participate in a protein complex showing an E3 ligase activity regulated by RAC1. Ubiquitination is directed towards itself and possibly other substrates, such as SMARCD2/BAF60b. Intrinsic E3 ligase activity has not been proven. In Homo sapiens (Human), this protein is Putative E3 ubiquitin-protein ligase UNKL (UNKL).